A 147-amino-acid chain; its full sequence is Large ribosomal subunit protein uL13 (147 aa).

The protein belongs to the universal ribosomal protein uL13 family. In terms of assembly, part of the 50S ribosomal subunit.

This protein is one of the early assembly proteins of the 50S ribosomal subunit, although it is not seen to bind rRNA by itself. It is important during the early stages of 50S assembly. This is Large ribosomal subunit protein uL13 from Beutenbergia cavernae (strain ATCC BAA-8 / DSM 12333 / CCUG 43141 / JCM 11478 / NBRC 16432 / NCIMB 13614 / HKI 0122).